The chain runs to 567 residues: Allo-aromadendrene synthase TPS4FN (567 aa).

(2E,6E)-farnesyl diphosphate-binding residues include R282, D319, D323, R462, and D465. Positions 319 and 323 each coordinate Mg(2+). A DDXXD motif motif is present at residues 319-323 (DDIYD). Mg(2+) is bound by residues D465 and E473.

The protein belongs to the terpene synthase family. Tpsb subfamily. Mg(2+) is required as a cofactor. Mn(2+) serves as cofactor.

It catalyses the reaction (2E,6E)-farnesyl diphosphate = alpha-humulene + diphosphate. The catalysed reaction is (2E,6E)-farnesyl diphosphate = (+)-valencene + diphosphate. The enzyme catalyses (2E)-geranyl diphosphate = beta-myrcene + diphosphate. It carries out the reaction (2E,6E)-farnesyl diphosphate = allo-aromadendrene + diphosphate. It catalyses the reaction (2E,6E)-farnesyl diphosphate + H2O = palustrol + diphosphate. It participates in secondary metabolite biosynthesis; terpenoid biosynthesis. Its function is as follows. Involved in sesquiterpene olefins biosynthesis, constituants of cannabinoids and terpenoids-rich resins. Catalyzes mainly the conversion of (2E)-farnesyl diphosphate to allo-aromadendrene, and also produces minor products such as alpha-humulene, valencene and palustrol. Can also use (2E)-geranyl diphosphate as substrate with low efficiency, producing minor amounts of myrcene. This is Allo-aromadendrene synthase TPS4FN from Cannabis sativa (Hemp).